A 536-amino-acid chain; its full sequence is Aminopeptidase (536 aa).

An N-terminal signal peptide occupies residues 1–24 (MSNKNNLRYALGALALSVSAASLA). Residues 152–255 (AGDVTAKVVP…ATYDNGVAWS (104 aa)) form the PA domain. Thr196 carries the post-translational modification Phosphothreonine. His296 and Asp308 together coordinate Zn(2+). The active-site Proton acceptor is the Glu340. Zn(2+)-binding residues include Glu341, Asp369, and His467. A disulfide bridge connects residues Cys465 and Cys470.

The protein belongs to the peptidase M28 family. M28A subfamily. It depends on Zn(2+) as a cofactor.

It localises to the secreted. The catalysed reaction is Release of an N-terminal amino acid, Xaa-|-Yaa-, in which Xaa is preferably Leu, but may be other amino acids including Pro although not Arg or Lys, and Yaa may be Pro. Amino acid amides and methyl esters are also readily hydrolyzed, but rates on arylamides are exceedingly low.. Its function is as follows. A secreted aminopeptidase. Acts on free N-terminal amino groups with a very strong preference for Leu in the first position. The polypeptide is Aminopeptidase (Pseudomonas aeruginosa (strain UCBPP-PA14)).